Consider the following 244-residue polypeptide: NAD(P)H-quinone oxidoreductase subunit K (244 aa).

Positions 60, 61, 125, and 156 each coordinate [4Fe-4S] cluster.

It belongs to the complex I 20 kDa subunit family. In terms of assembly, NDH-1 can be composed of about 15 different subunits; different subcomplexes with different compositions have been identified which probably have different functions. Requires [4Fe-4S] cluster as cofactor.

It is found in the cellular thylakoid membrane. The enzyme catalyses a plastoquinone + NADH + (n+1) H(+)(in) = a plastoquinol + NAD(+) + n H(+)(out). The catalysed reaction is a plastoquinone + NADPH + (n+1) H(+)(in) = a plastoquinol + NADP(+) + n H(+)(out). NDH-1 shuttles electrons from an unknown electron donor, via FMN and iron-sulfur (Fe-S) centers, to quinones in the respiratory and/or the photosynthetic chain. The immediate electron acceptor for the enzyme in this species is believed to be plastoquinone. Couples the redox reaction to proton translocation, and thus conserves the redox energy in a proton gradient. Cyanobacterial NDH-1 also plays a role in inorganic carbon-concentration. In Synechococcus sp. (strain CC9902), this protein is NAD(P)H-quinone oxidoreductase subunit K.